Reading from the N-terminus, the 376-residue chain is Queuine tRNA-ribosyltransferase (376 aa).

Aspartate 90 acts as the Proton acceptor in catalysis. Substrate-binding positions include 90-94 (DSGGF), aspartate 144, glutamine 193, and glycine 220. Residues 251-257 (GVGTPED) are RNA binding. Aspartate 270 acts as the Nucleophile in catalysis. The segment at 275–279 (TRNAR) is RNA binding; important for wobble base 34 recognition. Cysteine 308, cysteine 310, cysteine 313, and histidine 339 together coordinate Zn(2+).

The protein belongs to the queuine tRNA-ribosyltransferase family. Homodimer. Within each dimer, one monomer is responsible for RNA recognition and catalysis, while the other monomer binds to the replacement base PreQ1. It depends on Zn(2+) as a cofactor.

It catalyses the reaction 7-aminomethyl-7-carbaguanine + guanosine(34) in tRNA = 7-aminomethyl-7-carbaguanosine(34) in tRNA + guanine. It participates in tRNA modification; tRNA-queuosine biosynthesis. Functionally, catalyzes the base-exchange of a guanine (G) residue with the queuine precursor 7-aminomethyl-7-deazaguanine (PreQ1) at position 34 (anticodon wobble position) in tRNAs with GU(N) anticodons (tRNA-Asp, -Asn, -His and -Tyr). Catalysis occurs through a double-displacement mechanism. The nucleophile active site attacks the C1' of nucleotide 34 to detach the guanine base from the RNA, forming a covalent enzyme-RNA intermediate. The proton acceptor active site deprotonates the incoming PreQ1, allowing a nucleophilic attack on the C1' of the ribose to form the product. After dissociation, two additional enzymatic reactions on the tRNA convert PreQ1 to queuine (Q), resulting in the hypermodified nucleoside queuosine (7-(((4,5-cis-dihydroxy-2-cyclopenten-1-yl)amino)methyl)-7-deazaguanosine). The chain is Queuine tRNA-ribosyltransferase from Cupriavidus necator (strain ATCC 17699 / DSM 428 / KCTC 22496 / NCIMB 10442 / H16 / Stanier 337) (Ralstonia eutropha).